A 203-amino-acid polypeptide reads, in one-letter code: Imidazoleglycerol-phosphate dehydratase (203 aa).

This sequence belongs to the imidazoleglycerol-phosphate dehydratase family.

The protein resides in the cytoplasm. It catalyses the reaction D-erythro-1-(imidazol-4-yl)glycerol 3-phosphate = 3-(imidazol-4-yl)-2-oxopropyl phosphate + H2O. The protein operates within amino-acid biosynthesis; L-histidine biosynthesis; L-histidine from 5-phospho-alpha-D-ribose 1-diphosphate: step 6/9. The polypeptide is Imidazoleglycerol-phosphate dehydratase (Salinispora arenicola (strain CNS-205)).